A 112-amino-acid polypeptide reads, in one-letter code: Nucleoid-associated protein lpp2803 (112 aa).

The protein belongs to the YbaB/EbfC family. Homodimer.

The protein localises to the cytoplasm. It is found in the nucleoid. Its function is as follows. Binds to DNA and alters its conformation. May be involved in regulation of gene expression, nucleoid organization and DNA protection. The sequence is that of Nucleoid-associated protein lpp2803 from Legionella pneumophila (strain Paris).